Consider the following 153-residue polypeptide: D-aminoacyl-tRNA deacylase (153 aa).

The Gly-cisPro motif, important for rejection of L-amino acids motif lies at 137 to 138 (GP).

The protein belongs to the DTD family. As to quaternary structure, homodimer.

Its subcellular location is the cytoplasm. The catalysed reaction is glycyl-tRNA(Ala) + H2O = tRNA(Ala) + glycine + H(+). The enzyme catalyses a D-aminoacyl-tRNA + H2O = a tRNA + a D-alpha-amino acid + H(+). Functionally, an aminoacyl-tRNA editing enzyme that deacylates mischarged D-aminoacyl-tRNAs. Also deacylates mischarged glycyl-tRNA(Ala), protecting cells against glycine mischarging by AlaRS. Acts via tRNA-based rather than protein-based catalysis; rejects L-amino acids rather than detecting D-amino acids in the active site. By recycling D-aminoacyl-tRNA to D-amino acids and free tRNA molecules, this enzyme counteracts the toxicity associated with the formation of D-aminoacyl-tRNA entities in vivo and helps enforce protein L-homochirality. In Dehalococcoides mccartyi (strain ATCC BAA-2266 / KCTC 15142 / 195) (Dehalococcoides ethenogenes (strain 195)), this protein is D-aminoacyl-tRNA deacylase.